Here is a 361-residue protein sequence, read N- to C-terminus: Protein phosphatase 1 regulatory subunit 7 (361 aa).

The disordered stretch occupies residues 1 to 64 (MAAERGAGQQ…RGAEDPEEEH (64 aa)). Ala2 is modified (N-acetylalanine). Ser12, Ser24, Ser27, Ser45, and Ser48 each carry phosphoserine. Residues 17 to 34 (EVDRRVESEESGDEEGKK) are compositionally biased toward basic and acidic residues. A compositionally biased stretch (basic and acidic residues) spans 48–58 (SLKDGVDRGAE). LRR repeat units follow at residues 78–99 (DAED…EVLK), 100–121 (KVKS…EELQ), 122–143 (SLRE…EALT), 144–165 (ELEV…DKLT), 166–187 (QLKK…SNLH), 188–209 (QLQM…DTLT), 210–231 (NLES…DALT), 232–253 (NLTV…QSLV), 254–275 (NLRE…ENNN), 276–297 (KLTM…SHLT), and 298–319 (ELQE…DELK). Ser323 carries the post-translational modification Phosphoserine. An LRRCT domain is found at 332–361 (NPLQKDPQYRRKVMLALPSVRQIDATYVRF).

This sequence belongs to the SDS22 family. Interacts with PPP1CA, PPP1CB and PPP1CC/PPP1G. In terms of tissue distribution, widely expressed with high level in testis. Expression increases during puberty. Expressed in spermatids and probably also in spermatozoa.

The protein resides in the nucleus. Its function is as follows. Regulatory subunit of protein phosphatase 1. This is Protein phosphatase 1 regulatory subunit 7 (Ppp1r7) from Mus musculus (Mouse).